A 221-amino-acid chain; its full sequence is Octanoyltransferase (221 aa).

A BPL/LPL catalytic domain is found at 40–218 (PNLEDVLILL…AFAEVFGLEL (179 aa)). Substrate contacts are provided by residues 82 to 89 (RGGEVTYH), 149 to 151 (AIG), and 162 to 164 (GFA). Cys-180 serves as the catalytic Acyl-thioester intermediate.

Belongs to the LipB family.

It localises to the cytoplasm. It catalyses the reaction octanoyl-[ACP] + L-lysyl-[protein] = N(6)-octanoyl-L-lysyl-[protein] + holo-[ACP] + H(+). It participates in protein modification; protein lipoylation via endogenous pathway; protein N(6)-(lipoyl)lysine from octanoyl-[acyl-carrier-protein]: step 1/2. Functionally, catalyzes the transfer of endogenously produced octanoic acid from octanoyl-acyl-carrier-protein onto the lipoyl domains of lipoate-dependent enzymes. Lipoyl-ACP can also act as a substrate although octanoyl-ACP is likely to be the physiological substrate. The protein is Octanoyltransferase of Nostoc sp. (strain PCC 7120 / SAG 25.82 / UTEX 2576).